The sequence spans 545 residues: MELERSYRENDEYFLMFAATLLFGFVLYLFTLRRRRRRREKKGGAGSMEIINGAYKMTSSSEVNGHCTPEDIAGSSDDVIIVGAGVAGSALAYTLAKDGRRVHVIERDLTEQDRIVGELLQPGGYLKLVELGLEDCVNEIDAQRVFGYALYMDGKNTRLSYPLEKFHADVAGRSFHNGRFIQRMREKAASLPNVRMEQGTVTSLVEQKGTVKGVRYKTKNGQEMSAAYAPLTIVCDGCFSNLRHSLCNPKVDVPSCFVGLILENIDLPHINHGHVILADPSPILFYKISSTEIRCLVDVPGQKVPSIANGELAHYLKTSVAPQIPPELYKSFIAAIDKGKIKTMPNRSMPADPHSTPGALLLGDAFNMRHPLTGGGMTVALSDIVLIRDLLRPLRDLHDSSTLCKYLESFYTLRKPVASTINTLAGALYKVFCASPDKARQEMRDACFDYLSLGGICSEGPIALLSGLNPRPMSLFFHFFAVAIYGVGRLLIPFPSPRKMWLGARLISGASGIIFPIIKSEGVRQMFFPATVPAYYRAPPITKKM.

The chain crosses the membrane as a helical span at residues 12 to 32; it reads EYFLMFAATLLFGFVLYLFTL. FAD contacts are provided by residues 86-87, 106-107, R114, R185, V201, D364, and M377; these read VA and ER. 2 consecutive transmembrane segments (helical) span residues 475–495 and 500–520; these read LFFH…IPFP and MWLG…IIKS.

Belongs to the squalene monooxygenase family. FAD serves as cofactor. As to expression, weak expression in petioles and flower buds and barely detectable in roots and leaves. In petioles, preferentially observed in vascular bundle tissue (phloem cells and parenchymatous cells near xylem) and resin ducts.

The protein localises to the membrane. The enzyme catalyses squalene + reduced [NADPH--hemoprotein reductase] + O2 = (S)-2,3-epoxysqualene + oxidized [NADPH--hemoprotein reductase] + H2O + H(+). It participates in terpene metabolism; lanosterol biosynthesis; lanosterol from farnesyl diphosphate: step 2/3. Its function is as follows. Component of the triterpene saponins (e.g. ginsenosides or panaxosides) and phytosterols biosynthetic pathways. Catalyzes the first oxygenation step in sterol biosynthesis and is suggested to be one of the rate-limiting enzymes in this pathway. This chain is Squalene monooxygenase SE2, found in Panax ginseng (Korean ginseng).